Here is a 68-residue protein sequence, read N- to C-terminus: Conotoxin Pu5.5 (68 aa).

The signal sequence occupies residues M1 to A22. A propeptide spanning residues R23–R49 is cleaved from the precursor.

The protein belongs to the conotoxin T superfamily. In terms of processing, contains 2 disulfide bonds that can be either 'C1-C3, C2-C4' or 'C1-C4, C2-C3', since these disulfide connectivities have been observed for conotoxins with cysteine framework V (for examples, see AC P0DQQ7 and AC P81755). In terms of tissue distribution, expressed by the venom duct.

It localises to the secreted. In Conus pulicarius (Flea-bitten cone), this protein is Conotoxin Pu5.5.